The primary structure comprises 198 residues: Protein GrpE (198 aa).

The tract at residues 1-56 (MVEKKKSQAEKNNQSATEEEIEKAVKGSKRDSNAADEKNSASAAASSSAVSDAEPA) is disordered. Basic and acidic residues predominate over residues 22-39 (EKAVKGSKRDSNAADEKN). A compositionally biased stretch (low complexity) spans 40–56 (SASAAASSSAVSDAEPA).

It belongs to the GrpE family. As to quaternary structure, homodimer.

It localises to the cytoplasm. Functionally, participates actively in the response to hyperosmotic and heat shock by preventing the aggregation of stress-denatured proteins, in association with DnaK and GrpE. It is the nucleotide exchange factor for DnaK and may function as a thermosensor. Unfolded proteins bind initially to DnaJ; upon interaction with the DnaJ-bound protein, DnaK hydrolyzes its bound ATP, resulting in the formation of a stable complex. GrpE releases ADP from DnaK; ATP binding to DnaK triggers the release of the substrate protein, thus completing the reaction cycle. Several rounds of ATP-dependent interactions between DnaJ, DnaK and GrpE are required for fully efficient folding. The sequence is that of Protein GrpE from Oenococcus oeni (strain ATCC BAA-331 / PSU-1).